Consider the following 172-residue polypeptide: Single-stranded DNA-binding protein A (172 aa).

In terms of domain architecture, SSB spans 1–104; that stretch reads MLNRVVLVGR…VQAESVQFLE (104 aa). Tyrosine 82 is subject to Phosphotyrosine. The disordered stretch occupies residues 103–172; it reads LEPKNGGGSG…IDISDDDLPF (70 aa). The segment covering 107–131 has biased composition (gly residues); the sequence is NGGGSGSGGYNEGNSGGGQYFGGGQ. Over residues 132–149 the composition is skewed to low complexity; the sequence is NDNPFGGNQNNQRRNQGN. Positions 167-172 match the Important for interaction with partner proteins motif; the sequence is DDDLPF.

Homotetramer. Interacts with proteins involved in DNA metabolism such as PriA, RecQ, RecG, RecS, DnaE, RarA, RecJ, RecO, SbcC, RecD2 (formerly YrrC), XseA and Ung. Interacts with RecQ via its 10 C-terminal residues. Interacts with RecD2. In terms of processing, phosphorylated by YwqD, which increases ssDNA affinity; dephosphorylated by YwqE.

The protein resides in the cytoplasm. The protein localises to the nucleoid. Plays an important role in DNA replication, recombination and repair. Binds to single-stranded (ss)DNA and to an array of partner proteins to recruit them to their sites of action during DNA metabolism. Associates with oriC, this requires DnaA. SsbA binding to ssDNA prevents DnaB and DnaD individually from binding to DNA. Has a 20-fold higher affinity for ssDNA than SsbB; SsbA and DprA activate the homologous DNA strand exchange function of RecA-ATP. Enhances the activity of 3'-5' DNA helicase RecQ. In Bacillus subtilis (strain 168), this protein is Single-stranded DNA-binding protein A (ssbA).